The sequence spans 400 residues: Nicotinate phosphoribosyltransferase (400 aa).

His220 bears the Phosphohistidine; by autocatalysis mark.

It belongs to the NAPRTase family. In terms of processing, transiently phosphorylated on a His residue during the reaction cycle. Phosphorylation strongly increases the affinity for substrates and increases the rate of nicotinate D-ribonucleotide production. Dephosphorylation regenerates the low-affinity form of the enzyme, leading to product release.

The catalysed reaction is nicotinate + 5-phospho-alpha-D-ribose 1-diphosphate + ATP + H2O = nicotinate beta-D-ribonucleotide + ADP + phosphate + diphosphate. It functions in the pathway cofactor biosynthesis; NAD(+) biosynthesis; nicotinate D-ribonucleotide from nicotinate: step 1/1. Its function is as follows. Catalyzes the synthesis of beta-nicotinate D-ribonucleotide from nicotinate and 5-phospho-D-ribose 1-phosphate at the expense of ATP. This chain is Nicotinate phosphoribosyltransferase, found in Salmonella agona (strain SL483).